The sequence spans 243 residues: Beta-glucanase (243 aa).

The signal sequence occupies residues 1–27; the sequence is MSYRVKRMLMLLVTGLFLSLSTFAASA. The GH16 domain maps to 29 to 243; the sequence is AQTGGSFYEP…SLHWVRYTKR (215 aa). Cys-61 and Cys-90 are disulfide-bonded. Catalysis depends on Glu-134, which acts as the Nucleophile. Catalysis depends on Glu-138, which acts as the Proton donor.

This sequence belongs to the glycosyl hydrolase 16 family.

The enzyme catalyses Hydrolysis of (1-&gt;4)-beta-D-glucosidic linkages in beta-D-glucans containing (1-&gt;3)- and (1-&gt;4)-bonds.. The sequence is that of Beta-glucanase (bg1) from Bacillus licheniformis.